The chain runs to 50 residues: Large ribosomal subunit protein bL33 (50 aa).

It belongs to the bacterial ribosomal protein bL33 family.

The chain is Large ribosomal subunit protein bL33 from Sulfurimonas denitrificans (strain ATCC 33889 / DSM 1251) (Thiomicrospira denitrificans (strain ATCC 33889 / DSM 1251)).